The chain runs to 789 residues: Mediator of RNA polymerase II transcription subunit 15 (789 aa).

The interval Asp9 to Lys73 is interaction with SREBF1. Disordered regions lie at residues Leu88–Gly140 and Gln257–Ser326. Over residues Thr89–Pro102 the composition is skewed to low complexity. Gly residues predominate over residues Gln108–Ala118. Low complexity-rich tracts occupy residues Gln257–Gln274, Ala282–His291, and Ala302–Ser326. At Arg347 the chain carries Asymmetric dimethylarginine. The tract at residues Arg404–Gln531 is disordered. The segment covering Pro407 to Thr426 has biased composition (polar residues). A compositionally biased stretch (low complexity) spans Thr427–Gln450. Over residues Ser451–Gly463 the composition is skewed to pro residues. Over residues Ser464–Pro483 the composition is skewed to low complexity. 2 stretches are compositionally biased toward polar residues: residues Val494–Val504 and Thr512–Glu530. Positions Arg548–Ser565 match the Nuclear localization signal motif. Thr604 is subject to Phosphothreonine.

It belongs to the Mediator complex subunit 15 family. In terms of assembly, component of the Mediator complex, which is composed of MED1, MED4, MED6, MED7, MED8, MED9, MED10, MED11, MED12, MED13, MED13L, MED14, MED15, MED16, MED17, MED18, MED19, MED20, MED21, MED22, MED23, MED24, MED25, MED26, MED27, MED29, MED30, MED31, CCNC, CDK8 and CDC2L6/CDK11. The MED12, MED13, CCNC and CDK8 subunits form a distinct module termed the CDK8 module. Mediator containing the CDK8 module is less active than Mediator lacking this module in supporting transcriptional activation. Individual preparations of the Mediator complex lacking one or more distinct subunits have been variously termed ARC, CRSP, DRIP, PC2, SMCC and TRAP. Interacts with SMAD2, SMAD3, SREBF1 and SREBF2. Interacts with WWTR1. Interacts with TRIM11. Ubiquitinated by TRIM11, leading to proteasomal degradation.

It is found in the cytoplasm. The protein localises to the nucleus. Component of the Mediator complex, a coactivator involved in the regulated transcription of nearly all RNA polymerase II-dependent genes. Mediator functions as a bridge to convey information from gene-specific regulatory proteins to the basal RNA polymerase II transcription machinery. Mediator is recruited to promoters by direct interactions with regulatory proteins and serves as a scaffold for the assembly of a functional preinitiation complex with RNA polymerase II and the general transcription factors. Required for cholesterol-dependent gene regulation. Positively regulates the Nodal signaling pathway. The polypeptide is Mediator of RNA polymerase II transcription subunit 15 (Med15) (Mus musculus (Mouse)).